The chain runs to 479 residues: Sulfate adenylyltransferase subunit 1 (479 aa).

The region spanning 25–239 is the tr-type G domain; it reads KSLLRFLTCG…EVLETVDIQR (215 aa). Positions 34–41 are G1; the sequence is GSVDDGKS. 34-41 is a binding site for GTP; it reads GSVDDGKS. The segment at 92 to 96 is G2; the sequence is GITID. Positions 113–116 are G3; sequence DTPG. Residues 113–117 and 168–171 each bind GTP; these read DTPGH and NKMD. The G4 stretch occupies residues 168–171; it reads NKMD. The tract at residues 206 to 208 is G5; it reads SAL.

Belongs to the TRAFAC class translation factor GTPase superfamily. Classic translation factor GTPase family. CysN/NodQ subfamily. Heterodimer composed of CysD, the smaller subunit, and CysN.

The catalysed reaction is sulfate + ATP + H(+) = adenosine 5'-phosphosulfate + diphosphate. The protein operates within sulfur metabolism; hydrogen sulfide biosynthesis; sulfite from sulfate: step 1/3. Functionally, with CysD forms the ATP sulfurylase (ATPS) that catalyzes the adenylation of sulfate producing adenosine 5'-phosphosulfate (APS) and diphosphate, the first enzymatic step in sulfur assimilation pathway. APS synthesis involves the formation of a high-energy phosphoric-sulfuric acid anhydride bond driven by GTP hydrolysis by CysN coupled to ATP hydrolysis by CysD. The sequence is that of Sulfate adenylyltransferase subunit 1 from Salmonella heidelberg (strain SL476).